Here is a 192-residue protein sequence, read N- to C-terminus: uncharacterized protein (192 aa).

To M.thermoautotrophicum MTH863.

This is an uncharacterized protein from Methanocaldococcus jannaschii (strain ATCC 43067 / DSM 2661 / JAL-1 / JCM 10045 / NBRC 100440) (Methanococcus jannaschii).